The primary structure comprises 494 residues: MASRILVNIKEEVTCPICLELLTEPLSLDCGHSFCQACITANHKESTLHQGERSCPLCRISYPSENLRPNRHLANIVERLREVVLSPEEGQKVDLCARHGEKLLLFCQQDGNVICWLCERSQEHRGHHTFLVEEVAQTYRENLQVVLEMMRQKHQDAEKLEADVREEQASWKIQIQNDKTNIMAEFKQLRDILDCEESNELQNLEKEEKNILKRLVQSENDMVLQTQSISVLISDLEHRLQGSVMELLQGVDGVIKRVKNVTLQKPKTFLNEKRRVFRVPDLKGMLQVSKELTEVQRYWAHVTLVASHPSRAVISEDERQVRYQEWIHQSSGRVKYFYGVLGSPSITSGKHYWEVDVSNKSAWILGVCVSLKCAANRNGPGVENYQPKNGYWVIGLRNADNYSAFQDSVKYNDFQDGSRSTTYAPLIVPLFMTICPNRVGVFLDYEACTVSFFNVTSNGFLIYKFSNCHFSYPVFPYFSPMTCELPMTLCSPRS.

Ala2 is subject to N-acetylalanine. The segment at 15–59 adopts an RING-type zinc-finger fold; the sequence is CPICLELLTEPLSLDCGHSFCQACITANHKESTLHQGERSCPLCR. Residue Ser86 is modified to Phosphoserine. Residues 91–132 form a B box-type zinc finger; the sequence is QKVDLCARHGEKLLLFCQQDGNVICWLCERSQEHRGHHTFLV. Zn(2+) contacts are provided by Cys96, His99, Cys118, and His124. The stretch at 140-223 forms a coiled coil; the sequence is RENLQVVLEM…RLVQSENDMV (84 aa). The interval 186–199 is required for interaction with GABARAP and for autophagy; that stretch reads FKQLRDILDCEESN. The B30.2/SPRY domain occupies 280–494; the sequence is PDLKGMLQVS…LPMTLCSPRS (215 aa).

The protein belongs to the TRIM/RBCC family. As to quaternary structure, can form homodimers and homotrimers. In addition to lower-order dimerization, also exhibits a higher-order multimerization and both low- and high-order multimerizations are essential for its restriction activity. Interacts with BTBD1 and BTBD2. Interacts with PSMC4, PSMC5, PSMD7 and HSPA8/HSC70. Interacts (via B30.2/SPRY domain) with HSPA1A/B. Interacts with PSMC2, MAP3K7/TAK1, TAB2 and TAB3. Interacts with SQSTM1. Interacts with TRIM6 and TRIM34. Interacts with ULK1 (phosphorylated form), GABARAP, GABARAPL1, GABARAPL2, MAP1LC3A, MAP1LC3C and BECN1. Degraded in a proteasome-independent fashion in the absence of viral infection but in a proteasome-dependent fashion following exposure to restriction sensitive virus. Post-translationally, autoubiquitinated in a RING finger- and UBE2D2-dependent manner. Monoubiquitinated by TRIM21. Deubiquitinated by Yersinia YopJ. Ubiquitination may not lead to proteasomal degradation.

Its subcellular location is the cytoplasm. It localises to the nucleus. The enzyme catalyses S-ubiquitinyl-[E2 ubiquitin-conjugating enzyme]-L-cysteine + [acceptor protein]-L-lysine = [E2 ubiquitin-conjugating enzyme]-L-cysteine + N(6)-ubiquitinyl-[acceptor protein]-L-lysine.. It participates in protein modification; protein ubiquitination. Functionally, capsid-specific restriction factor that prevents infection from non-host-adapted retroviruses. Blocks viral replication early in the life cycle, after viral entry but before reverse transcription. In addition to acting as a capsid-specific restriction factor, also acts as a pattern recognition receptor that activates innate immune signaling in response to the retroviral capsid lattice. Binding to the viral capsid triggers its E3 ubiquitin ligase activity, and in concert with the heterodimeric ubiquitin conjugating enzyme complex UBE2V1-UBE2N (also known as UBC13-UEV1A complex) generates 'Lys-63'-linked polyubiquitin chains, which in turn are catalysts in the autophosphorylation of the MAP3K7/TAK1 complex (includes TAK1, TAB2, and TAB3). Activation of the MAP3K7/TAK1 complex by autophosphorylation results in the induction and expression of NF-kappa-B and MAPK-responsive inflammatory genes, thereby leading to an innate immune response in the infected cell. Plays a role in regulating autophagy through activation of autophagy regulator BECN1 by causing its dissociation from its inhibitors BCL2 and TAB2. This is Tripartite motif-containing protein 5 (TRIM5) from Plecturocebus donacophilus (Bolivian gray titi monkey).